The chain runs to 392 residues: tRNA (guanine(26)-N(2)/guanine(27)-N(2))-dimethyltransferase (392 aa).

Residues 2 to 375 enclose the Trm1 methyltransferase domain; sequence EIVQEGIAKI…LSFEEVMKKM (374 aa). Residues Arg-36, Arg-66, Asp-84, Glu-113, and Ala-114 each coordinate S-adenosyl-L-methionine. Cys-247, Cys-250, Cys-266, and Cys-269 together coordinate Zn(2+).

Belongs to the class I-like SAM-binding methyltransferase superfamily. Trm1 family.

The enzyme catalyses guanosine(26)/guanosine(27) in tRNA + 4 S-adenosyl-L-methionine = N(2)-dimethylguanosine(26)/N(2)-dimethylguanosine(27) in tRNA + 4 S-adenosyl-L-homocysteine + 4 H(+). Functionally, dimethylates the guanine residues at position 26 and 27 of one or more tRNAs using S-adenosyl-L-methionine as donor of the methyl groups. This is tRNA (guanine(26)-N(2)/guanine(27)-N(2))-dimethyltransferase from Aquifex aeolicus (strain VF5).